Reading from the N-terminus, the 237-residue chain is Ribonuclease PH (237 aa).

Residues R86 and 124–126 (GTR) each bind phosphate.

It belongs to the RNase PH family. In terms of assembly, homohexameric ring arranged as a trimer of dimers.

It catalyses the reaction tRNA(n+1) + phosphate = tRNA(n) + a ribonucleoside 5'-diphosphate. Its function is as follows. Phosphorolytic 3'-5' exoribonuclease that plays an important role in tRNA 3'-end maturation. Removes nucleotide residues following the 3'-CCA terminus of tRNAs; can also add nucleotides to the ends of RNA molecules by using nucleoside diphosphates as substrates, but this may not be physiologically important. Probably plays a role in initiation of 16S rRNA degradation (leading to ribosome degradation) during starvation. The sequence is that of Ribonuclease PH from Tolumonas auensis (strain DSM 9187 / NBRC 110442 / TA 4).